Here is a 252-residue protein sequence, read N- to C-terminus: tRNA (guanine-N(1)-)-methyltransferase (252 aa).

Residues glycine 113 and 133–138 (IGDYVL) contribute to the S-adenosyl-L-methionine site.

This sequence belongs to the RNA methyltransferase TrmD family. As to quaternary structure, homodimer.

It is found in the cytoplasm. The enzyme catalyses guanosine(37) in tRNA + S-adenosyl-L-methionine = N(1)-methylguanosine(37) in tRNA + S-adenosyl-L-homocysteine + H(+). Functionally, specifically methylates guanosine-37 in various tRNAs. The chain is tRNA (guanine-N(1)-)-methyltransferase from Baumannia cicadellinicola subsp. Homalodisca coagulata.